A 494-amino-acid chain; its full sequence is Guanosine-5'-triphosphate,3'-diphosphate pyrophosphatase (494 aa).

The protein belongs to the GppA/Ppx family. GppA subfamily.

The enzyme catalyses guanosine 3'-diphosphate 5'-triphosphate + H2O = guanosine 3',5'-bis(diphosphate) + phosphate + H(+). The protein operates within purine metabolism; ppGpp biosynthesis; ppGpp from GTP: step 2/2. Catalyzes the conversion of pppGpp to ppGpp. Guanosine pentaphosphate (pppGpp) is a cytoplasmic signaling molecule which together with ppGpp controls the 'stringent response', an adaptive process that allows bacteria to respond to amino acid starvation, resulting in the coordinated regulation of numerous cellular activities. This chain is Guanosine-5'-triphosphate,3'-diphosphate pyrophosphatase, found in Cronobacter sakazakii (strain ATCC BAA-894) (Enterobacter sakazakii).